Consider the following 217-residue polypeptide: TPA-induced transmembrane protein (217 aa).

The interval 1–37 is disordered; that stretch reads MDLAQPSQPVDELELSVLERQPEENTPLNGADKVFPS. A helical membrane pass occupies residues 66–86; that stretch reads LWMIITSIFLGVITVIIIGLC.

In terms of assembly, interacts with LIPH. In terms of tissue distribution, detected predominantly in the skin, with strongest expression in the inner root sheath of the hair follicle.

It localises to the endoplasmic reticulum. It is found in the cell membrane. Has a role in LIPH-mediated synthesis of 2-acyl lysophosphatidic acid (LPA). LPA is a bioactive lipid mediator involved in different biological processes, and necessary to promote hair formation and growth. This is TPA-induced transmembrane protein (TTMP) from Homo sapiens (Human).